The following is a 666-amino-acid chain: Collagen alpha-1(XXV) chain (666 aa).

The tract at residues 1–24 is disordered; sequence MLVKKLAGKGGGRESGSEDPRPLG. Residues 1-33 are Cytoplasmic-facing; the sequence is MLVKKLAGKGGGRESGSEDPRPLGQRCAGTMPS. Residues 11–21 are compositionally biased toward basic and acidic residues; sequence GGRESGSEDPR. The chain crosses the membrane as a helical; Signal-anchor for type II membrane protein span at residues 34–54; it reads CTALATLLSVVAVAFCFYLGV. Residues 55–666 lie on the Extracellular side of the membrane; the sequence is KTNDLQARIA…GLPMPGCWQK (612 aa). The tract at residues 116 to 168 is disordered; the sequence is LECNCPAGPPGKRGKRGRRGESGPPGQPGPQGPPGPKGDKGEQGDQGPRMVFP. A Collagen-like 1 domain is found at 121 to 164; it reads PAGPPGKRGKRGRRGESGPPGQPGPQGPPGPKGDKGEQGDQGPR. A compositionally biased stretch (pro residues) spans 140 to 151; it reads PGQPGPQGPPGP. Residues 181–188 are interaction with amyloid-beta peptide; that stretch reads LIKRRLIK. Disordered regions lie at residues 189-428 and 445-666; these read GDQG…ATEI and LTVT…CWQK. Collagen-like domains lie at 192 to 247, 249 to 308, 311 to 370, 373 to 425, 455 to 514, 529 to 588, and 589 to 648; these read GQAG…QKGS, GAPG…PGSS, GIKG…AGPP, GERG…DPGA, GPQG…KGEK, GPPG…KGAM, and GEPG…DGLD. Pro residues predominate over residues 196 to 208; that stretch reads PPGPPGPPGPRGP. Residues 230–245 are compositionally biased toward low complexity; that stretch reads PGEQGLMGPLGPPGQK. The span at 280–290 shows a compositional bias: basic and acidic residues; that stretch reads EPGKEGEKGDA. Over residues 336-358 the composition is skewed to low complexity; the sequence is LPGIKGEPGFIGPQGEPGLPGLP. 2 stretches are compositionally biased toward basic and acidic residues: residues 361–377 and 398–407; these read KGDRGEAGPPGRGERGD and SKGDRGDKGD. The span at 457 to 466 shows a compositional bias: low complexity; that stretch reads QGLQGPKGEQ. A compositionally biased stretch (gly residues) spans 494-503; the sequence is GEKGGLGLPG. The span at 528 to 543 shows a compositional bias: pro residues; it reads IGPPGPPGPHGPPGPM. Basic and acidic residues predominate over residues 615–638; the sequence is RGEKGDLGEKGEKGFRGVKGEKGE.

In terms of assembly, forms homodimers and homotrimers. Binds to the fibrillized forms of amyloid-beta protein 40 (beta-APP40) and amyloid-betad protein 42 (beta-APP42). Found associated with beta-APP42 more frequently than with beta-APP40. Post-translationally, undergoes proteolytic cleavage by furin protease to yield the soluble collagen-like Alzheimer amyloid plaque component. In terms of processing, glycosylated. Hydroxylated on proline and lysine residues. Expressed predominantly in neurons with low levels also detected in heart, testis and eye.

The protein localises to the membrane. In terms of biological role, inhibits fibrillization of amyloid-beta peptide during the elongation phase. Has also been shown to assemble amyloid fibrils into protease-resistant aggregates. Binds heparin. This Mus musculus (Mouse) protein is Collagen alpha-1(XXV) chain.